The primary structure comprises 154 residues: 6,7-dimethyl-8-ribityllumazine synthase (154 aa).

5-amino-6-(D-ribitylamino)uracil contacts are provided by residues Phe-15, 47-49, and 71-73; these read TFD and AVI. (2S)-2-hydroxy-3-oxobutyl phosphate is bound at residue 76–77; it reads ET. His-79 serves as the catalytic Proton donor. Leu-104 serves as a coordination point for 5-amino-6-(D-ribitylamino)uracil. Arg-119 serves as a coordination point for (2S)-2-hydroxy-3-oxobutyl phosphate.

Belongs to the DMRL synthase family.

The enzyme catalyses (2S)-2-hydroxy-3-oxobutyl phosphate + 5-amino-6-(D-ribitylamino)uracil = 6,7-dimethyl-8-(1-D-ribityl)lumazine + phosphate + 2 H2O + H(+). The protein operates within cofactor biosynthesis; riboflavin biosynthesis; riboflavin from 2-hydroxy-3-oxobutyl phosphate and 5-amino-6-(D-ribitylamino)uracil: step 1/2. Catalyzes the formation of 6,7-dimethyl-8-ribityllumazine by condensation of 5-amino-6-(D-ribitylamino)uracil with 3,4-dihydroxy-2-butanone 4-phosphate. This is the penultimate step in the biosynthesis of riboflavin. In Saccharolobus islandicus (strain L.S.2.15 / Lassen #1) (Sulfolobus islandicus), this protein is 6,7-dimethyl-8-ribityllumazine synthase.